An 84-amino-acid polypeptide reads, in one-letter code: Small ribosomal subunit protein uS17 (84 aa).

It belongs to the universal ribosomal protein uS17 family. Part of the 30S ribosomal subunit.

Functionally, one of the primary rRNA binding proteins, it binds specifically to the 5'-end of 16S ribosomal RNA. The protein is Small ribosomal subunit protein uS17 of Caldanaerobacter subterraneus subsp. tengcongensis (strain DSM 15242 / JCM 11007 / NBRC 100824 / MB4) (Thermoanaerobacter tengcongensis).